The chain runs to 241 residues: Class B acid phosphatase (241 aa).

The N-terminal stretch at 1-27 (MFITTKKSLIALVLATAGLISSPVSFA) is a signal peptide. Asp-72 (nucleophile) is an active-site residue. The Mg(2+) site is built by Asp-72 and Asp-74. Asp-74 (proton donor) is an active-site residue. Substrate-binding positions include 141-142 (TG) and Lys-181. Asp-196 contributes to the Mg(2+) binding site.

Belongs to the class B bacterial acid phosphatase family. As to quaternary structure, homotetramer. Mg(2+) is required as a cofactor.

It localises to the periplasm. It catalyses the reaction a phosphate monoester + H2O = an alcohol + phosphate. In terms of biological role, dephosphorylates several organic phosphate monoesters. Also has a phosphotransferase activity catalyzing the transfer of low-energy phosphate groups from organic phosphate monoesters to free hydroxyl groups of various organic compounds. This is Class B acid phosphatase from Edwardsiella ictaluri (strain 93-146).